The following is a 302-amino-acid chain: Rab effector Noc2 (302 aa).

A RabBD domain is found at 41 to 158; it reads QRRTQCLSPG…KRSGAWFYKG (118 aa). Residues 89–146 form an FYVE-type zinc finger; sequence GNGVSQCLLCGEMLGFLGSSSVFCKDCRKKVCTKCGIEASPGQKRPLWLCKICSEQRE. Residues cysteine 95, cysteine 98, cysteine 112, cysteine 115, cysteine 120, cysteine 123, cysteine 138, and cysteine 141 each contribute to the Zn(2+) site. 2 disordered regions span residues 174 to 194 and 206 to 302; these read DPHFRPLPVEPTEPQPQSAEV and VSSD…TTHY. Phosphoserine is present on serine 248. The span at 258–269 shows a compositional bias: low complexity; the sequence is SHLSGSQSSLGS.

As to quaternary structure, recruited to dense-core vesicles through specific interaction with RAB27A in endocrine cells. Interacts with RAB3A, RAB3B, RAB3C and RAB3D. Interacts with ZYX. In terms of tissue distribution, highly expressed in pancreatic islets and parotid. High to moderate expression in adrenal gland, pituitary gland and ovary.

The protein localises to the cytoplasm. Its subcellular location is the cytoplasmic vesicle. It is found in the secretory vesicle membrane. Functionally, rab GTPase effector involved in the late steps of regulated exocytosis, both in endocrine and exocrine cells. Regulates the exocytosis of dense-core vesicles in neuroendocrine cells through interaction with RAB27A. Acts as a potential RAB3B effector protein in epithelial cells. In Rattus norvegicus (Rat), this protein is Rab effector Noc2 (Rph3al).